The primary structure comprises 204 residues: Thymidylate kinase (204 aa).

9–16 (GIEASGKT) provides a ligand contact to ATP.

It belongs to the thymidylate kinase family.

It catalyses the reaction dTMP + ATP = dTDP + ADP. In terms of biological role, phosphorylation of dTMP to form dTDP in both de novo and salvage pathways of dTTP synthesis. In Sulfurihydrogenibium sp. (strain YO3AOP1), this protein is Thymidylate kinase.